A 429-amino-acid chain; its full sequence is MTTSAQLFEQACRHIPGGVNSPVRAFKGMERAPVFVERAQGAYLYDVEGQRYIDYVGSWGPLITGHADPDVLGAVRSRLDDGLSFGTPTAIETRMAELICEIMPSIDMVRMVNSGTEATMSAIRLARGHTGRDKIVKFEGNYHGHSDSLLVKAGSGALTHGEPSSPGVPASLAEHTVTLPYNDLDAVRACFAELGDEIAGIIVEPVAGNMNCIPPQPDFLKGLREICDVHGSVLIFDEVMTGFRVALGGAQAHFGVTPDLTCLGKIVGGGMPVGAFGGTREIMEQLSPLGPIYQAGTLAGNPLAMAAGIALLEKIRQPGFHDALAERVATLCDGLEARAREAGVDLITQRAGGMFGVFFTAQQRVDNFAQATACNADTFRRFFLGMLEHGVYLAPSPFEAGFMSSAHTPDDIQATLDAAEQVLATLENA.

Lysine 265 is modified (N6-(pyridoxal phosphate)lysine).

Belongs to the class-III pyridoxal-phosphate-dependent aminotransferase family. HemL subfamily. Homodimer. The cofactor is pyridoxal 5'-phosphate.

The protein resides in the cytoplasm. It carries out the reaction (S)-4-amino-5-oxopentanoate = 5-aminolevulinate. It functions in the pathway porphyrin-containing compound metabolism; protoporphyrin-IX biosynthesis; 5-aminolevulinate from L-glutamyl-tRNA(Glu): step 2/2. This chain is Glutamate-1-semialdehyde 2,1-aminomutase, found in Chromohalobacter salexigens (strain ATCC BAA-138 / DSM 3043 / CIP 106854 / NCIMB 13768 / 1H11).